A 201-amino-acid chain; its full sequence is MCALDRRERPLNSQSVNKYILNVQNIYRNSPVPVCVRNKNRKILYANGAFIELFSREDKPLSGESYIRLQVEIFLSSLELECQALGHGSAFCRRFNFHGEIYQIRMENVSFYNDESVVLWQINPFPDYPFFALNQSGSNTNTSDKLTIWNDLSPGTLVVFSFYMLGVGHATIARELGITDRASEDRIKPVKRKIKEFFEHV.

The protein localises to the cytoplasm. Its function is as follows. This protein is essential for positively regulating the expression of transfer genes that are involved in the conjugal transfer of DNA between bacterial cells. This Escherichia coli protein is Protein TraJ (traJ).